The sequence spans 628 residues: MTEKFDYKELGLKVGLEIHRQLDTKKLFSPVPSELTEKVDFTFERRLRPTMSELGEIDPAALEEFKKGRKYIYEGNYELSDLVYMDEEPPRGPDREALEVTLQIAYLLNAKPVDEVHFMRKIVIDGSNVSGFQRTAIIALDGKVDTPWGSVGIPTICLEEDACRIVERKEKEVIYRLDRLGIPLVEISTTPDIHHPEQAKVVAKYIGDALRATRKVKRGLGTIRQDLNVSIKGGARVEIKGVQELDMIPLIIEREVERQLNLLKIRDELRERGVRPEDIKEEFYDVTDVFENTESKIIARTIKKGGNVLAVKLPKFRGLIGREIQPGRRLGTEMADRAKKYVKGIFHIDELPNYGITEKEVNAVIEKLGLGELDAFVLVAADEETAKKALREVIKRAREAIEGVPEETRRALPDGNTQYMRPLPGKARMYPETDIPSIFIPPEEKERIKANLPELPQERVERYVKEYRIDKSLAETLVNDERDELFEELVKKGVKPSLAASILVVVLKGLKKEVPIENITDDHIREAFQLYTEGKIAKEAFEEIFKELALHPEKSAAQVAEEKGLTLLSEEEVERIIDEVVQQNIEVIKAKGMGAMGMIMGRAMAKLRGRADGKLVSTLVRRKIQELS.

This sequence belongs to the GatB/GatE family. GatE subfamily. Heterodimer of GatD and GatE.

The catalysed reaction is L-glutamyl-tRNA(Gln) + L-glutamine + ATP + H2O = L-glutaminyl-tRNA(Gln) + L-glutamate + ADP + phosphate + H(+). Allows the formation of correctly charged Gln-tRNA(Gln) through the transamidation of misacylated Glu-tRNA(Gln) in organisms which lack glutaminyl-tRNA synthetase. The reaction takes place in the presence of glutamine and ATP through an activated gamma-phospho-Glu-tRNA(Gln). The GatDE system is specific for glutamate and does not act on aspartate. This is Glutamyl-tRNA(Gln) amidotransferase subunit E from Thermococcus gammatolerans (strain DSM 15229 / JCM 11827 / EJ3).